A 74-amino-acid chain; its full sequence is Pelophylaxin-2 (74 aa).

The first 22 residues, 1–22, serve as a signal peptide directing secretion; that stretch reads MFTMKKSLLFFFFLGTIALSLC. Residues 23–42 constitute a propeptide that is removed on maturation; that stretch reads EEERGADEEENGAEITDEEV. An intrachain disulfide couples Cys-68 to Cys-74.

Expressed by the skin glands.

The protein localises to the secreted. In terms of biological role, antimicrobial peptide. This is Pelophylaxin-2 from Pelophylax fukienensis (Fukien gold-striped pond frog).